The following is an 867-amino-acid chain: Prominin-1 (867 aa).

A signal peptide spans 1–19 (MALVFSALLLLGLCGKISS). The Extracellular segment spans residues 20–107 (EGQPAFHNTP…VLALKIALYE (88 aa)). The chain crosses the membrane as a helical span at residues 108–128 (IGVLICAILGLLFIILMPLVG). Over 129–158 (CFFCMCRCCNKCGGEMHQRQKQNAPCRRKC) the chain is Cytoplasmic. The chain crosses the membrane as a helical span at residues 159-179 (LGLSLLVICLLMSLGIIYGFV). At 180–434 (ANQQTRTRIK…LPKLEEYDSY (255 aa)) the chain is on the extracellular side. 3 positions are modified to N6-acetyllysine: Lys-226, Lys-258, and Lys-265. Residues Asn-273, Asn-291, Asn-332, Asn-374, and Asn-415 are each glycosylated (N-linked (GlcNAc...) asparagine). The chain crosses the membrane as a helical span at residues 435–455 (WWLGGLIVCFLLTLIVTFFFL). Over 456–487 (GLLCGVFGYDKHATPTRRGCVSNTGGIFLMAG) the chain is Cytoplasmic. A helical membrane pass occupies residues 488–508 (VGFGFLFCWILMILVVLTFVV). At 509–794 (GANVEKLLCE…LCGYVADPLN (286 aa)) the chain is on the extracellular side. N-linked (GlcNAc...) asparagine glycans are attached at residues Asn-554, Asn-581, and Asn-732. The helical transmembrane segment at 795–815 (LFWFGIGKATVLLLPAVIIAI) threads the bilayer. At 816-867 (KLAKYYRRMDSEDVYDDVETVPMKNLEIGSNGYHKDHLYGVHNPVMTSPSRY) the chain is on the cytoplasmic side. Ser-865 carries the post-translational modification Phosphoserine.

This sequence belongs to the prominin family. In terms of assembly, interacts with CDHR1 and with actin filaments. Interacts with NAT8 and NAT8B. In terms of processing, acetylation at Lys-226, Lys-258 and Lys-265 by NAT8 and NAT8B may control PROM1 protein expression and its function in cell apoptosis. In the submandibular gland, expressed on the apical side of epithelial cells. In the parotid gland, expressed in the intercalated ducts. In the sublingual gland, expressed in intercalated ducts. In the extraorbital lacrimal gland, expressed in the intercalated tubules and larger intralobular ducts. Expressed in the retina. Present in urine within small membrane particles (at protein level). In the embryo, expressed on the apical side of neuroepithelial cells and of other epithelia such as lung buds, gut and ureter buds. In the adult, expressed at the apical side of the kidney tubules and of the ependymal layer of the brain. Not expressed in gut, liver, lung, pituitary, adrenal, heart or spleen. Localized to the nascent disk membranes at the base of the rod outer segment in the retina (at protein level).

It localises to the apical cell membrane. It is found in the cell projection. Its subcellular location is the microvillus membrane. The protein resides in the cilium. The protein localises to the photoreceptor outer segment. It localises to the endoplasmic reticulum. It is found in the endoplasmic reticulum-Golgi intermediate compartment. In terms of biological role, may play a role in cell differentiation, proliferation and apoptosis. Binds cholesterol in cholesterol-containing plasma membrane microdomains and may play a role in the organization of the apical plasma membrane in epithelial cells. During early retinal development acts as a key regulator of disk morphogenesis. Involved in regulation of MAPK and Akt signaling pathways. In neuroblastoma cells suppresses cell differentiation such as neurite outgrowth in a RET-dependent manner. In Mus musculus (Mouse), this protein is Prominin-1 (Prom1).